A 419-amino-acid polypeptide reads, in one-letter code: Probable serine/threonine-protein kinase CST (419 aa).

Gly-2 carries the N-myristoyl glycine lipid modification. The S-palmitoyl cysteine moiety is linked to residue Cys-4. Residues 8–48 (FSSSSPSKTGLHSHATTNNHSNGTEFSSTTGATTNSSVGQQ) form a disordered region. Polar residues predominate over residues 15–48 (KTGLHSHATTNNHSNGTEFSSTTGATTNSSVGQQ). The 283-residue stretch at 86–368 (FKPDSMLGQG…KEVVEVLEHI (283 aa)) folds into the Protein kinase domain. 92–100 (LGQGGFGKV) is a binding site for ATP. The residue at position 117 (Ser-117) is a Phosphoserine. Lys-124 is an ATP binding site. Tyr-169 is subject to Phosphotyrosine. Asp-218 functions as the Proton acceptor in the catalytic mechanism. Position 222 is a phosphoserine (Ser-222). Thr-253 and Thr-258 each carry phosphothreonine. Phosphotyrosine is present on Tyr-266. A compositionally biased stretch (polar residues) spans 378–390 (SSTKQAVANSSRS). A disordered region spans residues 378–419 (SSTKQAVANSSRSSPHHYRYKAGALGAERKRATPGRFGSVEK).

The protein belongs to the protein kinase superfamily. Ser/Thr protein kinase family. In terms of assembly, interacts with SOBIR1/EVR and RLK5/HAE. In terms of processing, autophosphorylated on serine, threonine and tyrosine residues.

Its subcellular location is the cell membrane. It localises to the nucleus. The enzyme catalyses L-seryl-[protein] + ATP = O-phospho-L-seryl-[protein] + ADP + H(+). The catalysed reaction is L-threonyl-[protein] + ATP = O-phospho-L-threonyl-[protein] + ADP + H(+). In terms of biological role, acts as a spatial inhibitor of signaling that modulates abscission zone cell adhesion and expansion. Acts both directly and indirectly by physically interacting with RLK5/HAE and SOBIR1/EVR at the cell surface. This is Probable serine/threonine-protein kinase CST from Arabidopsis thaliana (Mouse-ear cress).